We begin with the raw amino-acid sequence, 626 residues long: Chaperone protein DnaK (626 aa).

Position 197 is a phosphothreonine; by autocatalysis (Thr197). Low complexity predominate over residues Ala598–Thr612. The segment at Ala598–Lys626 is disordered. Acidic residues predominate over residues Gln613–Lys626.

It belongs to the heat shock protein 70 family.

Acts as a chaperone. The polypeptide is Chaperone protein DnaK (Flavobacterium psychrophilum (strain ATCC 49511 / DSM 21280 / CIP 103535 / JIP02/86)).